Reading from the N-terminus, the 218-residue chain is MGTRDDEYDYLFKVVLIGDSGVGKSNLLSRFTRNEFNLESKSTIGVEFATRSIQVDGKTIKAQIWDTAGQERYRAITSAYYRGAVGALLVYDIAKHLTYENVERWLKELRDHADSNIVIMLVGNKSDLRHLRAVPTDEARAFAEKNNLSFIETSALDSTNVEEAFKNILTEIYRIVSQKQIADRAAHDESPGNNVVDISVPPTTDGQRPNKLQCCQSL.

Gly2 carries the N-acetylglycine modification. Arg4 carries the citrulline modification. The GTP site is built by Ser20, Gly21, Gly23, Lys24, Ser25, Asn26, Asn37, Leu38, Ser40, Ser42, and Thr43. Ser25 contributes to the Mg(2+) binding site. The Switch 1 signature appears at 36–47; the sequence is FNLESKSTIGVE. Positions 43 and 66 each coordinate Mg(2+). Positions 67–86 match the Switch 2 motif; the sequence is TAGQERYRAITSAYYRGAVG. Positions 69, 124, 125, 127, 155, and 156 each coordinate GTP. The interval 184 to 218 is disordered; it reads RAAHDESPGNNVVDISVPPTTDGQRPNKLQCCQSL. Residues Cys214 and Cys215 are each lipidated (S-geranylgeranyl cysteine). Residue Cys215 is modified to Cysteine methyl ester. Residues 216–218 constitute a propeptide, removed in mature form; that stretch reads QSL.

It belongs to the small GTPase superfamily. Rab family. As to quaternary structure, interacts with KCNMA1. Interacts with RAB11FIP1, RAB11FIP2, RAB11FIP3 and RAB11FIP4. May interact with TBC1D14. Interacts with ATP6V1E1. Interacts with PI4KB. Interacts (GDP-bound form) with ZFYVE27. Interacts (GDP-bound form) with KIF5A in a ZFYVE27-dependent manner. Interacts with RELCH. Interacts (in GTP-bound form) with TBC1D8B (via domain Rab-GAP TBC). Forms a complex containing RAB11B, ASAP1, Rabin8/RAB3IP, RAP11FIP3 and ARF4. Interacts with WDR44. Requires Mg(2+) as cofactor. Post-translationally, citrullinated by PADI4. As to expression, abundantly expressed in brain, heart and testis. Also detected in kidney and pancreatic islets.

It is found in the recycling endosome membrane. It localises to the cytoplasmic vesicle. Its subcellular location is the secretory vesicle. The protein resides in the synaptic vesicle membrane. The protein localises to the phagosome membrane. It catalyses the reaction GTP + H2O = GDP + phosphate + H(+). With respect to regulation, regulated by guanine nucleotide exchange factors (GEFs) which promote the exchange of bound GDP for free GTP. Regulated by GTPase activating proteins (GAPs) which increase the GTP hydrolysis activity. Inhibited by GDP dissociation inhibitors (GDIs) which prevent Rab-GDP dissociation. The small GTPases Rab are key regulators of intracellular membrane trafficking, from the formation of transport vesicles to their fusion with membranes. Rabs cycle between an inactive GDP-bound form and an active GTP-bound form that is able to recruit to membranes different set of downstream effectors directly responsible for vesicle formation, movement, tethering and fusion. The small Rab GTPase RAB11B plays a role in endocytic recycling, regulating apical recycling of several transmembrane proteins including cystic fibrosis transmembrane conductance regulator/CFTR, epithelial sodium channel/ENaC, potassium voltage-gated channel, and voltage-dependent L-type calcium channel. May also regulate constitutive and regulated secretion, like insulin granule exocytosis. Required for melanosome transport and release from melanocytes. Also regulates V-ATPase intracellular transport in response to extracellular acidosis. Promotes Rabin8/RAB3IP preciliary vesicular trafficking to mother centriole by forming a ciliary targeting complex containing Rab11, ASAP1, Rabin8/RAB3IP, RAB11FIP3 and ARF4, thereby regulating ciliogenesis initiation. On the contrary, upon LPAR1 receptor signaling pathway activation, interaction with phosphorylated WDR44 prevents Rab11-RAB3IP-RAB11FIP3 complex formation and cilia growth. The sequence is that of Ras-related protein Rab-11B from Mus musculus (Mouse).